The sequence spans 120 residues: NAD(P)H-quinone oxidoreductase subunit 3 (120 aa).

3 consecutive transmembrane segments (helical) span residues 11-31 (LIFLLLSALVPVLALTISYLI), 64-84 (MFALVFVVFDVETVFLYPWAV), and 89-109 (LGLLAFIEALIFIAILVVALV).

This sequence belongs to the complex I subunit 3 family. In terms of assembly, NDH-1 can be composed of about 15 different subunits; different subcomplexes with different compositions have been identified which probably have different functions.

The protein resides in the cell inner membrane. It catalyses the reaction a plastoquinone + NADH + (n+1) H(+)(in) = a plastoquinol + NAD(+) + n H(+)(out). It carries out the reaction a plastoquinone + NADPH + (n+1) H(+)(in) = a plastoquinol + NADP(+) + n H(+)(out). NDH-1 shuttles electrons from an unknown electron donor, via FMN and iron-sulfur (Fe-S) centers, to quinones in the respiratory and/or the photosynthetic chain. The immediate electron acceptor for the enzyme in this species is believed to be plastoquinone. Couples the redox reaction to proton translocation, and thus conserves the redox energy in a proton gradient. Cyanobacterial NDH-1 also plays a role in inorganic carbon-concentration. The sequence is that of NAD(P)H-quinone oxidoreductase subunit 3 from Gloeobacter violaceus (strain ATCC 29082 / PCC 7421).